A 1011-amino-acid chain; its full sequence is Ankyrin repeat domain-containing protein 18B (1011 aa).

ANK repeat units lie at residues 67–96 (KDRT…QINI), 100–129 (LNRT…NPNI), 133–162 (YGNT…NIEA), 166–195 (EGNT…NIHA), and 199–228 (FKRT…HISS). 2 disordered regions span residues 264-330 (LRND…GKKK) and 533-554 (MHPN…SEER). Coiled-coil stretches lie at residues 277 to 319 (ENLK…ENKQ), 385 to 639 (NEEM…ELVD), 692 to 722 (ISLL…CLEM), and 752 to 908 (FKKL…EAFA). Residues 280 to 293 (KKRKKRKKLKKRKE) show a composition bias toward basic residues. Basic and acidic residues predominate over residues 294–319 (GAKAEHNLKVASEEKQERLERSENKQ).

In Homo sapiens (Human), this protein is Ankyrin repeat domain-containing protein 18B (ANKRD18B).